Reading from the N-terminus, the 127-residue chain is Longitudinals lacking protein-like (127 aa).

The BTB domain maps to 33 to 98 (TDVTLACEGQ…MYAGEVNVSQ (66 aa)).

As to quaternary structure, the BTB domain interacts with the BTB domain of Trl in vitro. Found in a Pc-containing complex.

Its subcellular location is the nucleus. Its function is as follows. Required, together with Trl, for maintaining the repressed state of target genes including homeotic genes Scr and Ubx. May also be involved in the activation of homeotic genes. Binds to a DNA Polycomb response element (PRE) at the bithorax complex. Also binds to polytene chromosomes at several hundred sites, many of which are shared with Trl and ph-p. Required during embryonic development. The chain is Longitudinals lacking protein-like from Drosophila melanogaster (Fruit fly).